The following is a 699-amino-acid chain: tRNA(Met) cytidine acetyltransferase TmcA (699 aa).

ATP-binding positions include Gln179, 201–210 (GRGKSTLAGM), and Arg323. The N-acetyltransferase domain occupies 359 to 543 (IEIPLYEQRD…SGCYTAMALL (185 aa)). Acetyl-CoA is bound by residues 471–473 (VAV), Glu511, and Arg518.

It belongs to the RNA cytidine acetyltransferase family. TmcA subfamily.

Its subcellular location is the cytoplasm. The catalysed reaction is cytidine(34) in elongator tRNA(Met) + acetyl-CoA + ATP + H2O = N(4)-acetylcytidine(34) in elongator tRNA(Met) + ADP + phosphate + CoA + H(+). In terms of biological role, catalyzes the formation of N(4)-acetylcytidine (ac(4)C) at the wobble position of tRNA(Met), by using acetyl-CoA as an acetyl donor and ATP (or GTP). The polypeptide is tRNA(Met) cytidine acetyltransferase TmcA (Yersinia pestis (strain D106004)).